The sequence spans 163 residues: Xanthine-guanine phosphoribosyltransferase (163 aa).

Residues 43 to 44 and 95 to 103 each bind 5-phospho-alpha-D-ribose 1-diphosphate; these read RG and DDLVDTGGT. Aspartate 96 serves as a coordination point for Mg(2+). Residues aspartate 99 and isoleucine 142 each contribute to the guanine site. Positions 99 and 142 each coordinate xanthine. Residues 99–103 and 141–142 each bind GMP; these read DTGGT and WI.

It belongs to the purine/pyrimidine phosphoribosyltransferase family. XGPT subfamily. As to quaternary structure, homotetramer. Requires Mg(2+) as cofactor.

Its subcellular location is the cell inner membrane. It carries out the reaction GMP + diphosphate = guanine + 5-phospho-alpha-D-ribose 1-diphosphate. The catalysed reaction is XMP + diphosphate = xanthine + 5-phospho-alpha-D-ribose 1-diphosphate. It catalyses the reaction IMP + diphosphate = hypoxanthine + 5-phospho-alpha-D-ribose 1-diphosphate. Its pathway is purine metabolism; GMP biosynthesis via salvage pathway; GMP from guanine: step 1/1. It participates in purine metabolism; XMP biosynthesis via salvage pathway; XMP from xanthine: step 1/1. Its function is as follows. Purine salvage pathway enzyme that catalyzes the transfer of the ribosyl-5-phosphate group from 5-phospho-alpha-D-ribose 1-diphosphate (PRPP) to the N9 position of the 6-oxopurines guanine and xanthine to form the corresponding ribonucleotides GMP (guanosine 5'-monophosphate) and XMP (xanthosine 5'-monophosphate), with the release of PPi. To a lesser extent, also acts on hypoxanthine. The sequence is that of Xanthine-guanine phosphoribosyltransferase from Nitratidesulfovibrio vulgaris (strain DP4) (Desulfovibrio vulgaris).